The following is a 546-amino-acid chain: Probable protein kinase UbiB (546 aa).

The Protein kinase domain occupies 123–501; it reads DFDETPLASA…SRRQGQARYL (379 aa). Residues 129–137 and Lys152 contribute to the ATP site; that span reads LASASIAQV. Asp287 serves as the catalytic Proton acceptor. The next 2 membrane-spanning stretches (helical) occupy residues 498–517 and 522–541; these read ARYL…FLLT and IEWG…LGWL.

It belongs to the ABC1 family. UbiB subfamily.

It is found in the cell inner membrane. The protein operates within cofactor biosynthesis; ubiquinone biosynthesis [regulation]. Functionally, is probably a protein kinase regulator of UbiI activity which is involved in aerobic coenzyme Q (ubiquinone) biosynthesis. This Aeromonas hydrophila subsp. hydrophila (strain ATCC 7966 / DSM 30187 / BCRC 13018 / CCUG 14551 / JCM 1027 / KCTC 2358 / NCIMB 9240 / NCTC 8049) protein is Probable protein kinase UbiB.